Consider the following 314-residue polypeptide: Acetyl-coenzyme A carboxylase carboxyl transferase subunit beta (314 aa).

The region spanning 37-307 (LWQKCPACDA…MSLPALEPTY (271 aa)) is the CoA carboxyltransferase N-terminal domain. Zn(2+)-binding residues include Cys-41, Cys-44, Cys-60, and Cys-63. Residues 41-63 (CPACDALTYTKDLQQNWQVCPSC) form a C4-type zinc finger.

Belongs to the AccD/PCCB family. As to quaternary structure, acetyl-CoA carboxylase is a heterohexamer composed of biotin carboxyl carrier protein (AccB), biotin carboxylase (AccC) and two subunits each of ACCase subunit alpha (AccA) and ACCase subunit beta (AccD). The cofactor is Zn(2+).

The protein localises to the cytoplasm. It catalyses the reaction N(6)-carboxybiotinyl-L-lysyl-[protein] + acetyl-CoA = N(6)-biotinyl-L-lysyl-[protein] + malonyl-CoA. The protein operates within lipid metabolism; malonyl-CoA biosynthesis; malonyl-CoA from acetyl-CoA: step 1/1. Its function is as follows. Component of the acetyl coenzyme A carboxylase (ACC) complex. Biotin carboxylase (BC) catalyzes the carboxylation of biotin on its carrier protein (BCCP) and then the CO(2) group is transferred by the transcarboxylase to acetyl-CoA to form malonyl-CoA. In Synechococcus sp. (strain JA-3-3Ab) (Cyanobacteria bacterium Yellowstone A-Prime), this protein is Acetyl-coenzyme A carboxylase carboxyl transferase subunit beta.